The chain runs to 430 residues: Adenylosuccinate synthetase (430 aa).

GTP contacts are provided by residues 12 to 18 and 40 to 42; these read GDEGKGK and GHT. The active-site Proton acceptor is the aspartate 13. The Mg(2+) site is built by aspartate 13 and glycine 40. IMP-binding positions include 13 to 16, 38 to 41, threonine 130, arginine 144, glutamine 224, threonine 239, and arginine 303; these read DEGK and NAGH. Catalysis depends on histidine 41, which acts as the Proton donor. Residue 299-305 coordinates substrate; it reads VVTGRKR. Residues arginine 305, 331-333, and 413-415 contribute to the GTP site; these read KLD and STS.

This sequence belongs to the adenylosuccinate synthetase family. Homodimer. It depends on Mg(2+) as a cofactor.

It is found in the cytoplasm. The catalysed reaction is IMP + L-aspartate + GTP = N(6)-(1,2-dicarboxyethyl)-AMP + GDP + phosphate + 2 H(+). Its pathway is purine metabolism; AMP biosynthesis via de novo pathway; AMP from IMP: step 1/2. In terms of biological role, plays an important role in the de novo pathway of purine nucleotide biosynthesis. Catalyzes the first committed step in the biosynthesis of AMP from IMP. This Methylobacterium sp. (strain 4-46) protein is Adenylosuccinate synthetase.